Consider the following 361-residue polypeptide: Hydroxymethylglutaryl-CoA synthase (361 aa).

Glu-92 serves as the catalytic Proton donor/acceptor. Catalysis depends on Cys-124, which acts as the Acyl-thioester intermediate. Residues Cys-124, Ser-165, Thr-214, and His-247 each contribute to the (3S)-3-hydroxy-3-methylglutaryl-CoA site. The active-site Proton donor/acceptor is His-247. Lys-252 contacts CoA. 3 residues coordinate (3S)-3-hydroxy-3-methylglutaryl-CoA: Lys-256, Asn-279, and Ser-309.

Belongs to the thiolase-like superfamily. Archaeal HMG-CoA synthase family. In terms of assembly, interacts with acetoacetyl-CoA thiolase that catalyzes the precedent step in the pathway and with a DUF35 protein. The acetoacetyl-CoA thiolase/HMG-CoA synthase complex channels the intermediate via a fused CoA-binding site, which allows for efficient coupling of the endergonic thiolase reaction with the exergonic HMGCS reaction.

It carries out the reaction acetoacetyl-CoA + acetyl-CoA + H2O = (3S)-3-hydroxy-3-methylglutaryl-CoA + CoA + H(+). It participates in metabolic intermediate biosynthesis; (R)-mevalonate biosynthesis; (R)-mevalonate from acetyl-CoA: step 2/3. Functionally, catalyzes the condensation of acetyl-CoA with acetoacetyl-CoA to form 3-hydroxy-3-methylglutaryl-CoA (HMG-CoA). Functions in the mevalonate (MVA) pathway leading to isopentenyl diphosphate (IPP), a key precursor for the biosynthesis of isoprenoid compounds that are building blocks of archaeal membrane lipids. The protein is Hydroxymethylglutaryl-CoA synthase of Aeropyrum pernix (strain ATCC 700893 / DSM 11879 / JCM 9820 / NBRC 100138 / K1).